The chain runs to 437 residues: (S)-6-hydroxynicotine oxidase (437 aa).

FAD-binding positions include serine 16, glutamate 35–arginine 37, arginine 43, glycine 57–glycine 60, valine 231, serine 405, and glutamate 413–isoleucine 415.

This sequence belongs to the flavin monoamine oxidase family. As to quaternary structure, homodimer. FAD serves as cofactor.

The catalysed reaction is (S)-6-hydroxynicotine + O2 + H2O = 6-hydroxypseudooxynicotine + H2O2. It carries out the reaction (S)-6-hydroxynicotine + O2 = 6-hydroxy-N-methylmyosmine + H2O2. It functions in the pathway alkaloid degradation; nicotine degradation; 6-hydroxypseudooxynicotine from nicotine (S-isomer route): step 2/2. With respect to regulation, partially inhibited by Co(2+) or Zn(2+) and significantly inhibited by Ag(+), Cu(2+) and Hg(2+). Its function is as follows. Involved in the degradation of L-nicotine. Catalyzes the oxidation of (S)-6-hydroxynicotine (6-hydroxy-L-nicotine) to 6-hydroxypseudooxynicotine. Oxidation of the pyrrolidine ring of (S)-6-hydroxynicotine leads to the formation of the optically inactive 6-hydroxy-N-methylmyosmine, which hydrolyzes spontaneously to 6-hydroxypseudooxynicotine. Acts with absolute stereospecificity on the L-form of 6-hydroxynicotine. Also involved in the degradation of nornicotine, and catalyzes the oxidation of 6-hydroxynornicotine to 6-hydroxymyosmine, which hydrolyzes to 6-hydroxypseudooxynornicotine. In vitro, converts (S)-nicotine into N-methylmyosmine, which spontaneously hydrolyzes spontaneously into pseudooxynicotine, but catalytic efficiency is about 1900-fold higher with (S)-6-hydroxynicotine. This chain is (S)-6-hydroxynicotine oxidase, found in Shinella sp. (strain HZN7).